A 41-amino-acid polypeptide reads, in one-letter code: U-theraphotoxin-Lk1a (41 aa).

Intrachain disulfides connect C1–C16, C8–C21, and C15–C36.

Belongs to the neurotoxin 14 (magi-1) family. 08 (Ltx-4) subfamily. Expressed by the venom gland.

It localises to the secreted. Functionally, toxin that causes irreversible contractile paralysis in adult Aedes aegypti resulting in 100% mortality after 24 hours. This chain is U-theraphotoxin-Lk1a, found in Lasiodora klugi (Bahia scarlet tarantula).